A 66-amino-acid chain; its full sequence is Large ribosomal subunit protein bL33c (66 aa).

The protein belongs to the bacterial ribosomal protein bL33 family.

It is found in the plastid. The protein localises to the chloroplast. The chain is Large ribosomal subunit protein bL33c from Fagopyrum esculentum subsp. ancestrale (Wild buckwheat).